The primary structure comprises 159 residues: Ribosomal RNA large subunit methyltransferase H (159 aa).

Residues L76, G108, and 127–132 each bind S-adenosyl-L-methionine; that span reads FSKMTF.

It belongs to the RNA methyltransferase RlmH family. In terms of assembly, homodimer.

The protein localises to the cytoplasm. The catalysed reaction is pseudouridine(1915) in 23S rRNA + S-adenosyl-L-methionine = N(3)-methylpseudouridine(1915) in 23S rRNA + S-adenosyl-L-homocysteine + H(+). Its function is as follows. Specifically methylates the pseudouridine at position 1915 (m3Psi1915) in 23S rRNA. This is Ribosomal RNA large subunit methyltransferase H from Exiguobacterium sp. (strain ATCC BAA-1283 / AT1b).